Here is a 629-residue protein sequence, read N- to C-terminus: Ribosomal protein S6 kinase 2 beta (629 aa).

The Protein kinase 1 domain maps to 62-321; that stretch reads FVLLKVLGQG…AEELKRHPFF (260 aa). Residues 68 to 76 and Lys94 each bind ATP; that span reads LGQGSFGKV. Residue Asp187 is the Proton acceptor of the active site. Position 221 is a phosphoserine (Ser221). The AGC-kinase C-terminal domain occupies 322-391; sequence STIDWNKLYR…VAPVLVEEDA (70 aa). Thr359 bears the Phosphothreonine mark. Ser363 carries the post-translational modification Phosphoserine. Ser380 carries the post-translational modification Phosphoserine; by autocatalysis. In terms of domain architecture, Protein kinase 2 spans 416–629; sequence YTVRETIGVG…PEEILARIGS (214 aa). ATP-binding positions include 422–430 and Lys445; that span reads IGVGSYSVC. The active-site Proton acceptor is Asp533. Position 571 is a phosphothreonine (Thr571).

It belongs to the protein kinase superfamily. AGC Ser/Thr protein kinase family. S6 kinase subfamily. It depends on Mg(2+) as a cofactor. Autophosphorylated on Ser-380, as part of the activation process.

It catalyses the reaction L-seryl-[protein] + ATP = O-phospho-L-seryl-[protein] + ADP + H(+). The enzyme catalyses L-threonyl-[protein] + ATP = O-phospho-L-threonyl-[protein] + ADP + H(+). With respect to regulation, activated by multiple phosphorylations on threonine and serine residues. In terms of biological role, serine/threonine kinase that may play a role in mediating the growth-factor and stress induced activation of transcription. This chain is Ribosomal protein S6 kinase 2 beta, found in Xenopus laevis (African clawed frog).